A 398-amino-acid polypeptide reads, in one-letter code: Nicotinate phosphoribosyltransferase 2 (398 aa).

Histidine 224 is modified (phosphohistidine; by autocatalysis).

Belongs to the NAPRTase family. Post-translationally, transiently phosphorylated on a His residue during the reaction cycle. Phosphorylation strongly increases the affinity for substrates and increases the rate of nicotinate D-ribonucleotide production. Dephosphorylation regenerates the low-affinity form of the enzyme, leading to product release.

The catalysed reaction is nicotinate + 5-phospho-alpha-D-ribose 1-diphosphate + ATP + H2O = nicotinate beta-D-ribonucleotide + ADP + phosphate + diphosphate. It participates in cofactor biosynthesis; NAD(+) biosynthesis; nicotinate D-ribonucleotide from nicotinate: step 1/1. In terms of biological role, catalyzes the synthesis of beta-nicotinate D-ribonucleotide from nicotinate and 5-phospho-D-ribose 1-phosphate at the expense of ATP. The sequence is that of Nicotinate phosphoribosyltransferase 2 from Pseudomonas aeruginosa (strain ATCC 15692 / DSM 22644 / CIP 104116 / JCM 14847 / LMG 12228 / 1C / PRS 101 / PAO1).